A 325-amino-acid chain; its full sequence is NADH-quinone oxidoreductase subunit H (325 aa).

8 helical membrane passes run 11 to 31, 81 to 101, 114 to 134, 149 to 169, 186 to 206, 237 to 257, 265 to 285, and 304 to 324; these read VLIAVLKAVVILVVVVVCGAL, MIFTLAPVIGFVSLLLAFAIV, IGILFFMMMAGLAVYAVLFAG, ASAQTLSYEVFIGLSFMGVVA, MWNVIPQFFGFLTFAIAGVAV, FFVGEYIGIVTVSALIVTMFF, LPPFVWFALKTAFFMVMFILI, and ICLPLTLLNLLATAAVILYNA.

It belongs to the complex I subunit 1 family. NDH-1 is composed of 13 different subunits. Subunits NuoA, H, J, K, L, M, N constitute the membrane sector of the complex.

It is found in the cell inner membrane. It carries out the reaction a quinone + NADH + 5 H(+)(in) = a quinol + NAD(+) + 4 H(+)(out). Functionally, NDH-1 shuttles electrons from NADH, via FMN and iron-sulfur (Fe-S) centers, to quinones in the respiratory chain. The immediate electron acceptor for the enzyme in this species is believed to be ubiquinone. Couples the redox reaction to proton translocation (for every two electrons transferred, four hydrogen ions are translocated across the cytoplasmic membrane), and thus conserves the redox energy in a proton gradient. This subunit may bind ubiquinone. This Photorhabdus laumondii subsp. laumondii (strain DSM 15139 / CIP 105565 / TT01) (Photorhabdus luminescens subsp. laumondii) protein is NADH-quinone oxidoreductase subunit H.